Reading from the N-terminus, the 283-residue chain is Probable endonuclease 4 (283 aa).

Zn(2+) is bound by residues His69, His109, Glu145, Asp179, His182, His216, Asp229, His231, and Glu261.

Belongs to the AP endonuclease 2 family. Requires Zn(2+) as cofactor.

The enzyme catalyses Endonucleolytic cleavage to 5'-phosphooligonucleotide end-products.. In terms of biological role, endonuclease IV plays a role in DNA repair. It cleaves phosphodiester bonds at apurinic or apyrimidinic (AP) sites, generating a 3'-hydroxyl group and a 5'-terminal sugar phosphate. The protein is Probable endonuclease 4 of Campylobacter curvus (strain 525.92).